Here is a 179-residue protein sequence, read N- to C-terminus: Large ribosomal subunit protein uL6 (179 aa).

This sequence belongs to the universal ribosomal protein uL6 family. As to quaternary structure, part of the 50S ribosomal subunit.

Its function is as follows. This protein binds to the 23S rRNA, and is important in its secondary structure. It is located near the subunit interface in the base of the L7/L12 stalk, and near the tRNA binding site of the peptidyltransferase center. In Halothermothrix orenii (strain H 168 / OCM 544 / DSM 9562), this protein is Large ribosomal subunit protein uL6.